A 342-amino-acid chain; its full sequence is Dihydroorotate dehydrogenase (quinone) (342 aa).

FMN-binding positions include 60–64 (AGFDK) and Thr-84. Lys-64 provides a ligand contact to substrate. 109–113 (NRMGF) lines the substrate pocket. Residues Asn-137 and Asn-170 each contribute to the FMN site. Residue Asn-170 participates in substrate binding. The Nucleophile role is filled by Ser-173. Asn-175 serves as a coordination point for substrate. 2 residues coordinate FMN: Lys-215 and Thr-243. Position 244 to 245 (244 to 245 (NT)) interacts with substrate. Residues Gly-266, Gly-295, and 316–317 (YT) each bind FMN.

It belongs to the dihydroorotate dehydrogenase family. Type 2 subfamily. As to quaternary structure, monomer. It depends on FMN as a cofactor.

The protein resides in the cell membrane. It carries out the reaction (S)-dihydroorotate + a quinone = orotate + a quinol. It participates in pyrimidine metabolism; UMP biosynthesis via de novo pathway; orotate from (S)-dihydroorotate (quinone route): step 1/1. Catalyzes the conversion of dihydroorotate to orotate with quinone as electron acceptor. The polypeptide is Dihydroorotate dehydrogenase (quinone) (Halorhodospira halophila (strain DSM 244 / SL1) (Ectothiorhodospira halophila (strain DSM 244 / SL1))).